The primary structure comprises 240 residues: MILYPAIDLKDGQAVRLVHGEMDQATVFNDNPAAQALEFVAAGCEWLHLVDLNGAFAGEPVNAAPVEAILEQCKVPAQLGGGIRDMATIERWLDKGLARVILGTVAVENPDLVREAARAFPGKVAVGIDARNGRVATKGWAEETDVMVTDLAKSFEDAGVAAIIYTDILRDGAMKGPNIKATADLARAVSIPVIASGGVSSLEDLIALRDCGASLNGAISGRALYDGALDLKQALAALKG.

Asp8 (proton acceptor) is an active-site residue. The Proton donor role is filled by Asp129.

It belongs to the HisA/HisF family.

Its subcellular location is the cytoplasm. The enzyme catalyses 1-(5-phospho-beta-D-ribosyl)-5-[(5-phospho-beta-D-ribosylamino)methylideneamino]imidazole-4-carboxamide = 5-[(5-phospho-1-deoxy-D-ribulos-1-ylimino)methylamino]-1-(5-phospho-beta-D-ribosyl)imidazole-4-carboxamide. It participates in amino-acid biosynthesis; L-histidine biosynthesis; L-histidine from 5-phospho-alpha-D-ribose 1-diphosphate: step 4/9. The chain is 1-(5-phosphoribosyl)-5-[(5-phosphoribosylamino)methylideneamino] imidazole-4-carboxamide isomerase 1 from Ruegeria pomeroyi (strain ATCC 700808 / DSM 15171 / DSS-3) (Silicibacter pomeroyi).